Consider the following 148-residue polypeptide: Large ribosomal subunit protein uL15 (148 aa).

The segment covering 1-30 has biased composition (basic residues); sequence MPSRLRKTRKLRGHVSHGHGRIGKHRKHPG. The tract at residues 1 to 37 is disordered; the sequence is MPSRLRKTRKLRGHVSHGHGRIGKHRKHPGGRGNAGG. H39 is modified ((3S)-3-hydroxyhistidine). An N6-acetyllysine mark is found at K47 and K55. Residue S68 is modified to Phosphoserine. K110 carries the post-translational modification N6-acetyllysine.

This sequence belongs to the universal ribosomal protein uL15 family. In terms of assembly, component of the large ribosomal subunit. Post-translationally, hydroxylated on His-39 by MINA.

The protein resides in the cytoplasm. In terms of biological role, component of the large ribosomal subunit. The ribosome is a large ribonucleoprotein complex responsible for the synthesis of proteins in the cell. The protein is Large ribosomal subunit protein uL15 (Rpl27a) of Rattus norvegicus (Rat).